Consider the following 573-residue polypeptide: MLQQGSSSRRSLHGNDFHTLTSPSRRDSLSIPRAVDARSASTIDLFYIPDATVSRRHSTLVANRSDNNGNGAPMRQYNKPNFASSSTSSLPSTRNRPSRYDNMNMNMNMNMNMNMNMNMNMNNHTTSDHNAHPQYRCRPNPSRRHSLMTIPEKYSGSRYSLRSSPPTYSNPRVRKELTPFQLQRKQMKSAFQFPNGENFTPRNQIARLPPSSTFPDSPSSSSLPLTQTGGPSSADNDSIATGTNNRSPQQTKAADANQKSESESPKAIRSNSKKISRFFRKIWSSKSSNSADSVEENSKTKQKRKNPERVVPEPITSLDQPVEIIKQSFSTVNNHETAVPSIKDSGIVQELTALGDNNRIPVLPPPRSPNRPTLSDKRTTKLYYCSQDSSNEDIAPEEKSTVFLKRLQDEWSTVYLNKLPLTASVPSSLSTTTDAANSSFINSSISSPAPSSSSSSSLVSRGPMQSISSSPTPAPSSGSSKSKNAVKSLRFADEIYVNDTWSAADYCRCDNTFLNNFFKGKSQDITNPSTFVGNNLSSTKNISNIEIKMEVNEFKRKEMRVHQDSAKYTHYYL.

2 disordered regions span residues 1 to 33 and 60 to 101; these read MLQQ…SIPR and LVAN…SRYD. Over residues 60–70 the composition is skewed to polar residues; the sequence is LVANRSDNNGN. N-linked (GlcNAc...) asparagine glycosylation occurs at Asn63. The segment covering 84–95 has biased composition (low complexity); that stretch reads SSSTSSLPSTRN. 10 consecutive repeat copies span residues 102–103, 104–105, 106–107, 108–109, 110–111, 112–113, 114–115, 116–117, 118–119, and 120–121. A 10 X 2 AA tandem repeats of N-M region spans residues 102–121; the sequence is NMNMNMNMNMNMNMNMNMNM. Residue Asn123 is glycosylated (N-linked (GlcNAc...) asparagine). Disordered regions lie at residues 150-174, 192-271, 286-317, and 357-379; these read IPEK…PRVR, QFPN…IRSN, KSSN…PITS, and NNRI…DKRT. A compositionally biased stretch (polar residues) spans 157-170; that stretch reads SRYSLRSSPPTYSN. Positions 208–225 are enriched in low complexity; it reads LPPSSTFPDSPSSSSLPL. Over residues 226-252 the composition is skewed to polar residues; the sequence is TQTGGPSSADNDSIATGTNNRSPQQTK. The N-linked (GlcNAc...) asparagine glycan is linked to Asn236. N-linked (GlcNAc...) asparagine glycans are attached at residues Asn437 and Asn442. Composition is skewed to low complexity over residues 441 to 457 and 466 to 483; these read INSS…SSSS and SISS…SKSK. The tract at residues 441–483 is disordered; it reads INSSISSPAPSSSSSSSLVSRGPMQSISSSPTPAPSSGSSKSK. Asn498, Asn535, and Asn541 each carry an N-linked (GlcNAc...) asparagine glycan.

This sequence to yeast AFR1. In terms of processing, N-glycosylated.

This is an uncharacterized protein from Saccharomyces cerevisiae (strain ATCC 204508 / S288c) (Baker's yeast).